The sequence spans 167 residues: MYLQLKSKLENVLSYFFRKMSQGYDNYDDMYDQNGASPAPSQNEKPGKSGPGFVGIKFCPECNNMLYPREDKESRVLMYSCRNCEHREVAANPCIYVNKLVHEIDELTQIVGDIIHDPTLPKTEEHQCPVCGKSKAVFFQAQTKKAEEEMRLYYVCASQDCQHRWTE.

The segment at 28–49 is disordered; sequence DDMYDQNGASPAPSQNEKPGKS. Residues 34 to 44 show a composition bias toward polar residues; sequence NGASPAPSQNE. 8 residues coordinate Zn(2+): cysteine 59, cysteine 62, cysteine 81, cysteine 84, cysteine 128, cysteine 131, cysteine 156, and cysteine 161. The C4-type zinc-finger motif lies at 59 to 84; it reads CPECNNMLYPREDKESRVLMYSCRNC. The TFIIS-type zinc-finger motif lies at 124–166; it reads EEHQCPVCGKSKAVFFQAQTKKAEEEMRLYYVCASQDCQHRWT.

It belongs to the archaeal RpoM/eukaryotic RPA12/RPB9/RPC11 RNA polymerase family. As to quaternary structure, component of the RNA polymerase II (Pol II) complex consisting of 12 subunits. In terms of tissue distribution, expressed in the soma and in the germline.

It is found in the nucleus. It localises to the nucleolus. In terms of biological role, DNA-dependent RNA polymerase catalyzes the transcription of DNA into RNA using the four ribonucleoside triphosphates as substrates. Component of RNA polymerase II which synthesizes mRNA precursors and many functional non-coding RNAs. Pol II is the central component of the basal RNA polymerase II transcription machinery. It is composed of mobile elements that move relative to each other. RPB9 is part of the upper jaw surrounding the central large cleft and thought to grab the incoming DNA template. Recruits ints-6, a component of the Integrator complex to PIWI-interacting RNA (piRNA) genes, to mediate Integrator complex-dependent cleavage of 3' ends of nascent transcripts upon RNA Pol II backtracking to terminate transcription and generate piRNA precursors. Promotes the biogenesis of secondary 22G-siRNAs (a class of 22 nucleotide siRNAs that possess a triphosphorylated guanine residue at the 5'-end). Involved in gene silencing mediated by a class of 21 nucleotide piRNAs that possess a uracil residue at the 5'-end (also called 21U-RNAs) and guide the Piwi protein prg-1 to its DNA targets for silencing. Plays a role in small RNA-directed transgenerational epigenetic inheritance (also called RNAe) over several generations. Not required for the transgenerational inheritance of exogenous small interfering RNAs (RNAi). May play a role in the silencing of the DNA transposable elements from the DNA transposon families, Chapaev-2 and CEMUDR1. The chain is DNA-directed RNA polymerase II subunit rpb-9 from Caenorhabditis elegans.